Here is a 173-residue protein sequence, read N- to C-terminus: NADH-ubiquinone oxidoreductase chain 6 (173 aa).

Transmembrane regions (helical) follow at residues 1-21 (MTYF…AVAS), 27-47 (YGVV…LSLG), 48-68 (VSFV…VVFV), 91-111 (GVGF…IGCL), and 141-161 (VGMF…VLEL).

This sequence belongs to the complex I subunit 6 family.

It localises to the mitochondrion membrane. It catalyses the reaction a ubiquinone + NADH + 5 H(+)(in) = a ubiquinol + NAD(+) + 4 H(+)(out). In terms of biological role, core subunit of the mitochondrial membrane respiratory chain NADH dehydrogenase (Complex I) that is believed to belong to the minimal assembly required for catalysis. Complex I functions in the transfer of electrons from NADH to the respiratory chain. The immediate electron acceptor for the enzyme is believed to be ubiquinone. This chain is NADH-ubiquinone oxidoreductase chain 6 (MT-ND6), found in Fratercula arctica (Atlantic puffin).